A 617-amino-acid polypeptide reads, in one-letter code: BPI fold-containing family B member 4 (617 aa).

A signal peptide spans 1–17 (MWTAWCVAALSVAAVCG). The disordered stretch occupies residues 124-149 (RPSDSAYHRGPGRYRSAADPSSAGRL). Asn275 carries N-linked (GlcNAc...) asparagine glycosylation. A disulfide bridge connects residues Cys297 and Cys334.

Belongs to the BPI/LBP/Plunc superfamily. BPI/LBP family. In terms of tissue distribution, highly expressed in olfactory mucosa but undetectable in thymus, kidney, lung, brain, spleen and liver.

It localises to the secreted. Its subcellular location is the cytoplasm. Functionally, may have the capacity to recognize and bind specific classes of odorants. May act as a carrier molecule, transporting odorants across the mucus layer to access receptor sites. May serve as a primary defense mechanism by recognizing and removing potentially harmful odorants or pathogenic microorganisms from the mucosa or clearing excess odorant from mucus to enable new odorant stimuli to be received. The protein is BPI fold-containing family B member 4 (Bpifb4) of Rattus norvegicus (Rat).